The following is a 119-amino-acid chain: DNA-binding protein TubR (119 aa).

Homodimer. Binds to TubZ filaments via the C-terminus of TubZ. DNA is not required for binding to TubZ.

Its function is as follows. A DNA-binding protein that is part of the type III plasmid partition system used to ensure correct segregation of the pBc10987 plasmid. Binds TubZ filaments but does not influence the GTPase activity of TubZ with or without DNA. Cooperatively binds to multiple regions in tubC (centromere-like site) upstream of its own gene with consensus sequence N(T/A)ATTNC(C/G)GNAAT(A/T)N; probably forms an extended DNA-protein filament. Binds sites in its own promoter region and presumably represses its expression; its effect on RNA expression has not been shown. Does not specifically bind to the putative origin of replication on pBc10987. The protein is DNA-binding protein TubR of Bacillus cereus (strain ATCC 10987 / NRS 248).